The primary structure comprises 319 residues: NAP1-binding protein (319 aa).

Over residues 34–43 (SALRSRRKQM) the composition is skewed to basic residues. The tract at residues 34–74 (SALRSRRKQMRPTGKSVLKRPRKVTDRKTEEKIRTNRRKTP) is disordered. Residues 56–67 (KVTDRKTEEKIR) are compositionally biased toward basic and acidic residues. Residues S251 and S260 each carry the phosphoserine modification. Residues 278 to 319 (EMQPLQENISPACPTPPYRSRETEKEDETLSPISVDFSSYLS) are disordered.

Interacts with NDC1 and MPS2.

In Saccharomyces cerevisiae (strain ATCC 204508 / S288c) (Baker's yeast), this protein is NAP1-binding protein (NBP1).